We begin with the raw amino-acid sequence, 711 residues long: MAEKTVYRVDGLSCTNCAAKFERNVKEIEGVTEAIVNFGASKITVTGEASIQQVEQAGAFEHLKIIPEKESFTDPEHFTDHQSFIRKNWRLLLSGLFIAVGYASQIMNGEDFYLTNALFIFAIFIGGYSLFKEGFKNLLKFEFTMETLMTIAIIGAAFIGEWAEGSIVVILFAVSEALERYSMDKARQSIRSLMDIAPKEALVRRSGTDRMVHVDDIQIGDIMIIKPGQKIAMDGHVVKGYSAVNQAAITGESIPVEKNIDDSVFAGTLNEEGLLEVAVTKRVEDTTISKIIHLVEEAQGERAPAQAFVDTFAKYYTPAIIVIAALIATVPPLLFGGNWETWVYQGLSVLVVGCPCALVVSTPVAIVTAIGNAAKNGVLVKGGVYLEEIGGLKAIAFDKTGTLTKGVPVVTDYIELTEATNIQHNKNYIIMAALEQLSQHPLASAIIKYGETREMDLTSINVNDFTSITGKGIRGTVDGNTYYVGSPVLFKELLASQFTDSIHRQVSDLQLKGKTAMLFGTNQKLISIVAVADEVRSSSQHVIKRLHELGIEKTIMLTGDNQATAQAIGQQVGVSEIEGELMPQDKLDYIKQLKINFGKVAMVGDGINDAPALAAATVGIAMGGAGTDTAIETADVALMGDDLQKLPFTVKLSRKTLQIIKQNITFSLVIKLIALLLVIPGWLTLWIAIMADMGATLLVTLNGLRLMKVKD.

The HMA domain maps to 3–66; that stretch reads EKTVYRVDGL…AGAFEHLKII (64 aa). Cys14 and Cys17 together coordinate Cd(2+). 5 helical membrane passes run 89-109, 111-131, 151-171, 317-337, and 347-367; these read WRLLLSGLFIAVGYASQIMNG, DFYLTNALFIFAIFIGGYSLF, IAIIGAAFIGEWAEGSIVVIL, TPAIIVIAALIATVPPLLFGG, and LSVLVVGCPCALVVSTPVAIV. The 4-aspartylphosphate intermediate role is filled by Asp398. Residues 669–689 traverse the membrane as a helical segment; it reads VIKLIALLLVIPGWLTLWIAI.

The protein belongs to the cation transport ATPase (P-type) (TC 3.A.3) family. Type IB subfamily.

It localises to the cell membrane. It catalyses the reaction Cd(2+)(in) + ATP + H2O = Cd(2+)(out) + ADP + phosphate + H(+). In terms of biological role, couples the hydrolysis of ATP with the export of cadmium. This is Probable cadmium-transporting ATPase (cadA) from Listeria monocytogenes.